A 187-amino-acid polypeptide reads, in one-letter code: Large ribosomal subunit protein eL18A (187 aa).

Ser16 and Ser64 each carry phosphoserine. Thr87, Thr89, and Thr134 each carry phosphothreonine. Ser136 bears the Phosphoserine mark. Thr138 is subject to Phosphothreonine.

The protein belongs to the eukaryotic ribosomal protein eL18 family. In terms of assembly, component of the large ribosomal subunit (LSU). Mature yeast ribosomes consist of a small (40S) and a large (60S) subunit. The 40S small subunit contains 1 molecule of ribosomal RNA (18S rRNA) and at least 33 different proteins. The large 60S subunit contains 3 rRNA molecules (25S, 5.8S and 5S rRNA) and at least 46 different proteins. eL18 interacts with NAP1.

It is found in the cytoplasm. In terms of biological role, component of the ribosome, a large ribonucleoprotein complex responsible for the synthesis of proteins in the cell. The small ribosomal subunit (SSU) binds messenger RNAs (mRNAs) and translates the encoded message by selecting cognate aminoacyl-transfer RNA (tRNA) molecules. The large subunit (LSU) contains the ribosomal catalytic site termed the peptidyl transferase center (PTC), which catalyzes the formation of peptide bonds, thereby polymerizing the amino acids delivered by tRNAs into a polypeptide chain. The nascent polypeptides leave the ribosome through a tunnel in the LSU and interact with protein factors that function in enzymatic processing, targeting, and the membrane insertion of nascent chains at the exit of the ribosomal tunnel. The sequence is that of Large ribosomal subunit protein eL18A (rpl1801) from Schizosaccharomyces pombe (strain 972 / ATCC 24843) (Fission yeast).